We begin with the raw amino-acid sequence, 446 residues long: Adenylosuccinate synthetase 1 (446 aa).

GTP is bound by residues 20–26 (GDEGKGK) and 48–50 (GHT). D21 (proton acceptor) is an active-site residue. Residues D21 and G48 each coordinate Mg(2+). Residues 21–24 (DEGK), 46–49 (NAGH), T137, R151, Q232, T247, and R319 contribute to the IMP site. Residue H49 is the Proton donor of the active site. 315–321 (SVTGRPR) serves as a coordination point for substrate. GTP contacts are provided by residues R321, 347–349 (KLD), and 429–431 (STG).

Belongs to the adenylosuccinate synthetase family. In terms of assembly, homodimer. The cofactor is Mg(2+).

The protein resides in the cytoplasm. It carries out the reaction IMP + L-aspartate + GTP = N(6)-(1,2-dicarboxyethyl)-AMP + GDP + phosphate + 2 H(+). It participates in purine metabolism; AMP biosynthesis via de novo pathway; AMP from IMP: step 1/2. Plays an important role in the de novo pathway of purine nucleotide biosynthesis. Catalyzes the first committed step in the biosynthesis of AMP from IMP. This is Adenylosuccinate synthetase 1 from Cupriavidus pinatubonensis (strain JMP 134 / LMG 1197) (Cupriavidus necator (strain JMP 134)).